Consider the following 426-residue polypeptide: Maintenance of mitochondrial morphology protein 1 (426 aa).

Residues Met1 to Gly100 are Lumenal-facing. A helical transmembrane segment spans residues Phe101 to Phe121. At Ser122 to Leu426 the chain is on the cytoplasmic side. One can recognise an SMP-LTD domain in the interval Pro194–Pro409.

It belongs to the MMM1 family. In terms of assembly, homodimer. Component of the ER-mitochondria encounter structure (ERMES) or MDM complex, composed of MMM1, MDM10, MDM12 and MDM34. An MMM1 homodimer associates with one molecule of MDM12 on each side in a pairwise head-to-tail manner, and the SMP-LTD domains of MMM1 and MDM12 generate a continuous hydrophobic tunnel for phospholipid trafficking.

It is found in the endoplasmic reticulum membrane. Its function is as follows. Component of the ERMES/MDM complex, which serves as a molecular tether to connect the endoplasmic reticulum (ER) and mitochondria. Components of this complex are involved in the control of mitochondrial shape and protein biogenesis, and function in nonvesicular lipid trafficking between the ER and mitochondria. The MDM12-MMM1 subcomplex functions in the major beta-barrel assembly pathway that is responsible for biogenesis of all outer membrane beta-barrel proteins, and acts in a late step after the SAM complex. The MDM10-MDM12-MMM1 subcomplex further acts in the TOM40-specific pathway after the action of the MDM12-MMM1 complex. Essential for establishing and maintaining the structure of mitochondria and maintenance of mtDNA nucleoids. The polypeptide is Maintenance of mitochondrial morphology protein 1 (Saccharomyces cerevisiae (strain AWRI1631) (Baker's yeast)).